The following is a 470-amino-acid chain: O-acyltransferase pboC (470 aa).

Active-site proton acceptor residues include His-149 and Asp-386.

This sequence belongs to the plant acyltransferase family. As to quaternary structure, monomer.

The protein operates within secondary metabolite biosynthesis. In terms of biological role, O-acetyltransferase; part of the gene cluster that mediates the biosynthesis of protubonine B, a hydroxylated and diacetylated cyclo-L-Trp-L-Leu derivative. Within the pathway, pboC catalyzes the acetylation of protubonine D at the hydroxy group to produce protubonine C. The first step of the protubonine B synthesis is performed by the nonribosomal peptide synthetase pboA that catalyzes the formation of cyclo-L-Trp-L-Leu by condensing L-Leu with L-Trp. The flavin-dependent monooxygenase pboD is responsible for hydroxylation at C-3 of the indole ring and subsequent formation of the pyrrolidine ring, leadind to protubonine D. Protubonine D is further diacetylated by two acetyltransferases, pboB and pboC, to form the final product protubonine B via protubonine C. This is O-acyltransferase pboC from Aspergillus ustus.